The following is a 299-amino-acid chain: Probable xyloglucan endotransglucosylase/hydrolase protein 10 (299 aa).

A signal peptide spans 1–29; that stretch reads MTLINRSKPFVLLVGFSIISSLLLWVSQA. The GH16 domain maps to 30 to 225; it reads SVVSSGDFNK…WSKGPFVASF (196 aa). Asparagine 51 carries an N-linked (GlcNAc...) asparagine glycan. Glutamate 111 acts as the Nucleophile in catalysis. Glutamate 115 functions as the Proton donor in the catalytic mechanism. Residues glutamate 115, 128 to 130, 138 to 140, 204 to 205, and glycine 209 each bind xyloglucan; these read QTN, NRE, and SW. Intrachain disulfides connect cysteine 233–cysteine 242 and cysteine 280–cysteine 294. An N-linked (GlcNAc...) asparagine glycan is attached at asparagine 238. Arginine 285 is a xyloglucan binding site.

The protein belongs to the glycosyl hydrolase 16 family. XTH group 1 subfamily. Post-translationally, contains at least one intrachain disulfide bond essential for its enzymatic activity.

It localises to the secreted. The protein localises to the cell wall. It is found in the extracellular space. Its subcellular location is the apoplast. The catalysed reaction is breaks a beta-(1-&gt;4) bond in the backbone of a xyloglucan and transfers the xyloglucanyl segment on to O-4 of the non-reducing terminal glucose residue of an acceptor, which can be a xyloglucan or an oligosaccharide of xyloglucan.. In terms of biological role, catalyzes xyloglucan endohydrolysis (XEH) and/or endotransglycosylation (XET). Cleaves and religates xyloglucan polymers, an essential constituent of the primary cell wall, and thereby participates in cell wall construction of growing tissues. In Arabidopsis thaliana (Mouse-ear cress), this protein is Probable xyloglucan endotransglucosylase/hydrolase protein 10 (XTH10).